Consider the following 345-residue polypeptide: Trace amine-associated receptor 6 (345 aa).

Residues 1–32 are Extracellular-facing; that stretch reads MGSNSSPPTVLQLCYENVTGSCVKTPYSPGSR. Asn-17 carries N-linked (GlcNAc...) asparagine glycosylation. Intrachain disulfides connect Cys-22/Cys-186 and Cys-105/Cys-190. The chain crosses the membrane as a helical span at residues 33–53; that stretch reads VILYAVFGFGAVLAVFGNLMV. Residues 54–68 are Cytoplasmic-facing; it reads MISILHFKQLHSPTN. The helical transmembrane segment at 69 to 89 threads the bilayer; the sequence is FLIASLACADFGVGISVMPFS. Over 90–107 the chain is Extracellular; that stretch reads MVRSIESCWYFGRSFCTF. Residues 108-128 form a helical membrane-spanning segment; it reads HTCCDVAFCYSSLFHLSFISI. The Cytoplasmic segment spans residues 129–147; it reads DRYIAVTDPLVYPTKFTVS. Residues 148–168 traverse the membrane as a helical segment; the sequence is VSGICIGVSWILPLVYSGAVF. Residues 169–202 are Extracellular-facing; that stretch reads YTGVYDDGLEELSSALNCVGGCQVVVNQNWVLID. Residues 174 to 187 form an extracellular Loop 2 (ECL2) region; that stretch reads DDGLEELSSALNCV. A helical membrane pass occupies residues 203 to 223; it reads FLSFLIPTLVMIILYGNIFLV. The Cytoplasmic portion of the chain corresponds to 224-259; the sequence is ARQQAKKIENIGSKTESSSESYKARVARRERKAAKT. The chain crosses the membrane as a helical span at residues 260-276; the sequence is LGITVVAFMISWLPYSI. The Extracellular segment spans residues 277 to 282; the sequence is DSLVDA. A helical membrane pass occupies residues 283–302; it reads FMGFITPAYIYEICVWCAYY. The Cytoplasmic portion of the chain corresponds to 303–345; it reads NSAMNPLIYALFYPWFKKAIKVIMSGQVFKNSSATMNLFSEQI.

It belongs to the G-protein coupled receptor 1 family. As to expression, specifically expressed in neurons of the olfactory epithelium, to discrete glomeruli predominantly localized to a confined bulb region. Present in a ventral area of the main olfactory epithelium.

The protein resides in the cell membrane. In terms of biological role, olfactory receptor specific for trace amines, such as beta-phenylethylamine (beta-PEA). Trace amine compounds are enriched in animal body fluids and act on trace amine-associated receptors (TAARs) to elicit both intraspecific and interspecific innate behaviors. Beta-PEA-binding causes a conformation change that triggers signaling via G(s)-class of G alpha proteins (GNAL or GNAS). The polypeptide is Trace amine-associated receptor 6 (Mus musculus (Mouse)).